The sequence spans 85 residues: uncharacterized protein (85 aa).

2 disordered regions span residues 1–28 and 35–54; these read MPQKPLKVTKKAKDPRRVTKKQKNLRKA and SKKKSLQHLKKLKKSSSLTE. A compositionally biased stretch (basic residues) spans 35–48; sequence SKKKSLQHLKKLKK.

It is found in the nucleus. This is an uncharacterized protein from Saccharomyces cerevisiae (strain ATCC 204508 / S288c) (Baker's yeast).